The sequence spans 961 residues: Translation initiation factor IF-2 (961 aa).

The span at Pro-146–His-158 shows a compositional bias: polar residues. Positions Pro-146–Pro-373 are disordered. The segment covering Asn-163–Ser-176 has biased composition (basic and acidic residues). Over residues Asn-177–Asn-187 the composition is skewed to low complexity. Positions Ser-230–Gln-239 are enriched in basic and acidic residues. Composition is skewed to polar residues over residues Glu-241 to His-285 and Tyr-301 to Ile-310. Positions Asn-355–Lys-364 are enriched in basic residues. Residues Arg-460–Glu-627 enclose the tr-type G domain. Positions Gly-469–Thr-476 are G1. Gly-469–Thr-476 contributes to the GTP binding site. Positions Gly-494–His-498 are G2. The segment at Asp-515–Gly-518 is G3. GTP is bound by residues Asp-515 to His-519 and Asn-569 to Asp-572. A G4 region spans residues Asn-569–Asp-572. Residues Ser-605 to Lys-607 form a G5 region.

Belongs to the TRAFAC class translation factor GTPase superfamily. Classic translation factor GTPase family. IF-2 subfamily.

The protein localises to the cytoplasm. In terms of biological role, one of the essential components for the initiation of protein synthesis. Protects formylmethionyl-tRNA from spontaneous hydrolysis and promotes its binding to the 30S ribosomal subunits. Also involved in the hydrolysis of GTP during the formation of the 70S ribosomal complex. The chain is Translation initiation factor IF-2 from Lawsonia intracellularis (strain PHE/MN1-00).